The following is a 379-amino-acid chain: Origin of replication complex subunit 2 (379 aa).

The segment at 1 to 25 (MALRGGHAAAAAGVSSGSEDDDEEA) is disordered. A compositionally biased stretch (low complexity) spans 8–17 (AAAAAGVSSG).

It belongs to the ORC2 family. As to quaternary structure, component of the origin recognition complex (ORC) composed of at least ORC1, ORC2, ORC3, ORC4, ORC5 and ORC6. ORC is regulated in a cell-cycle and development dependent manner. It is sequentially assembled at the exit from anaphase of mitosis and disassembled as cells enter S phase.

Its subcellular location is the nucleus. In terms of biological role, essential protein. Component of the origin recognition complex (ORC) that binds origins of replication. DNA-binding is ATP-dependent, however specific DNA sequences that define origins of replication have not been identified so far. ORC is required to assemble the pre-replication complex necessary to initiate DNA replication. The polypeptide is Origin of replication complex subunit 2 (Oryza sativa subsp. indica (Rice)).